Consider the following 141-residue polypeptide: Hemoglobin subunit alpha-1/2 (141 aa).

Residues 1–141 (VLSPTDKTNV…VSTVLTSKYR (141 aa)) enclose the Globin domain. S3 carries the phosphoserine modification. K7 is modified (N6-succinyllysine). T8 bears the Phosphothreonine mark. Position 11 is an N6-succinyllysine (K11). N6-acetyllysine; alternate is present on K16. An N6-succinyllysine; alternate modification is found at K16. Phosphotyrosine is present on Y24. K40 bears the N6-succinyllysine mark. Phosphoserine is present on S49. H58 lines the O2 pocket. Residue H87 participates in heme b binding. At S102 the chain carries Phosphoserine. Phosphothreonine is present on T108. A Phosphoserine modification is found at S124. Residues T134 and T137 each carry the phosphothreonine modification. Position 138 is a phosphoserine (S138).

It belongs to the globin family. In terms of assembly, heterotetramer of two alpha chains and two beta chains. As to expression, red blood cells.

In terms of biological role, involved in oxygen transport from the lung to the various peripheral tissues. This Tapirus terrestris (Lowland tapir) protein is Hemoglobin subunit alpha-1/2.